The chain runs to 477 residues: ETS translocation variant 1 (477 aa).

At Ser94 the chain carries Phosphoserine. The interval 128 to 178 (PQVGMRPSNPPTPSSTPVSPLHHASPNSAHTSKPDRAFPAHLPPSQPIQDS) is disordered. Ser191 and Ser216 each carry phosphoserine; by RPS6KA1 and RPS6KA5. A Glycyl lysine isopeptide (Lys-Gly) (interchain with G-Cter in SUMO2) cross-link involves residue Lys317. Positions 335-415 (LQLWQFLVAL…AGERYVYKFV (81 aa)) form a DNA-binding region, ETS.

Belongs to the ETS family. In terms of processing, sumoylated. Phosphorylated at Ser-191 and Ser-216 by RPS6KA1 and RPS6KA5; phosphorylation activates transcriptional activity.

The protein localises to the nucleus. Functionally, transcriptional activator that binds to DNA sequences containing the consensus pentanucleotide 5'-CGGA[AT]-3'. Required for olfactory dopaminergic neuron differentiation; may directly activate expression of tyrosine hydroxylase (TH). This is ETS translocation variant 1 (ETV1) from Bos taurus (Bovine).